The primary structure comprises 375 residues: MKICDNISEINDDQDLVFIDIEATDSKGEQRIIQFSGYRLNIKKNKIFNFNKKFNPEQEINSRIKTLLNFNKNFNNIEQMPKLDKQAAREIYCFVKNAIVITFTDFDIKKMHELFTYYNFDFEKIVYFDVYKFFEKKLQTKSVPSLFSLGILSGIKINFFKLHNALYDAFILKEIFMCIRHKTNEELYEMYRYYEFLPKIISSSYFVTNEQEKNRGIIKKEIKYVMYIKEFDFSNKFNLDFVVYKKDHHFYSKPIYDSSLELQTISSLTSKSNFMKVKLANIFFNYLSKSAVFSIKKLSIKQSEKFLKFYKTQTNKRKVIKVLNLNLKKEIKPENFVIKAQIICEILFKNPIIHHFVHEYLKIFQNIFSQEEKDN.

This is an uncharacterized protein from Ureaplasma parvum serovar 3 (strain ATCC 700970).